The sequence spans 208 residues: ATP-dependent Clp protease proteolytic subunit (208 aa).

The active-site Nucleophile is the serine 105. Histidine 130 is a catalytic residue.

The protein belongs to the peptidase S14 family. Fourteen ClpP subunits assemble into 2 heptameric rings which stack back to back to give a disk-like structure with a central cavity, resembling the structure of eukaryotic proteasomes.

The protein resides in the cytoplasm. It catalyses the reaction Hydrolysis of proteins to small peptides in the presence of ATP and magnesium. alpha-casein is the usual test substrate. In the absence of ATP, only oligopeptides shorter than five residues are hydrolyzed (such as succinyl-Leu-Tyr-|-NHMec, and Leu-Tyr-Leu-|-Tyr-Trp, in which cleavage of the -Tyr-|-Leu- and -Tyr-|-Trp bonds also occurs).. In terms of biological role, cleaves peptides in various proteins in a process that requires ATP hydrolysis. Has a chymotrypsin-like activity. Plays a major role in the degradation of misfolded proteins. In Xylella fastidiosa (strain M12), this protein is ATP-dependent Clp protease proteolytic subunit.